The chain runs to 559 residues: Nuclear envelope integral membrane protein (559 aa).

Residues 1 to 15 form the signal peptide; the sequence is MRLLTLALLVAGSLA. 3 N-linked (GlcNAc...) asparagine glycosylation sites follow: N67, N81, and N114. Transmembrane regions (helical) follow at residues 164–184, 192–212, 218–238, 267–287, and 290–310; these read YTSG…FIVW, IGVP…HFAW, IMIE…LISM, LIYF…ALII, and ICRG…KAVW. N-linked (GlcNAc...) asparagine glycosylation is found at N408 and N465. Disordered regions lie at residues 475 to 494 and 510 to 559; these read RRDS…PRMP and KNGR…DADE. A compositionally biased stretch (polar residues) spans 517–526; sequence PSSSTASGMT. The span at 530 to 539 shows a compositional bias: basic and acidic residues; that stretch reads YMRKARRIDA.

It belongs to the NEMP family.

The protein localises to the nucleus inner membrane. In terms of biological role, contributes to nuclear envelope stiffness in germ cells. Required for fertility. The sequence is that of Nuclear envelope integral membrane protein from Caenorhabditis elegans.